The chain runs to 1782 residues: MRFIVLLFICSFIYPCYVSSIGFRRISKVSLKKTKCEDGYFQCNSGECIPVDKKCDYIDHCIDGSDEDFECDHLDEKSFITCAKDQFKCKNQECIPAAKYCDMVNDCLDESDEHDGCVKHLNCTNKFLCTDGHCINKEWVCDGRNDCPDGNDEWNCKANKTSSASSCKTENYQYMCANHRCISLKVVCDKKDDCGDGSDEGPGCTQFNCSSAGCQSNCHQTPKGSVCTCKPGYKLQKDNRTCNDIDECQAYGICDQDCMNVPGSYACTCQREYYLENDKRTCKARAGEATLVFSTRTSILGMHVDSEKFFSLATNLNHAVGVAMYGDYVYWSNLEENGYNTIVKKRTYHPQAPNEVIVTTGLALITGIDVDWITKNIYFADEDNHCIGVCTNDGTYCTVLIKDTDKPTGVALLPTQGKMYWSDWGTFPHIAVAGMDGKNVRIFVNVKLEWPKSVTIDYPNERLYWVDAKSKMIESVRLDGTDRRIVLHDIIQEPFSMTVFQNKLYWSDWESNGIQTCNKFTGKDWKILIRNHNKPYSVHMDHSAIKPNIDNPCYSNPCSQLCMLNQNKGYTCGCTLDKKLNADKHTCQDVKKNQHLLIIQGRKFINYYHEFLGKPKVMTLSLQHMSQQSYNNLVNIISDPLSGQIIICHLQLSTPFLTSTTDILRYDPVHHSSEKIVTINKIFFELAFDYIGNNLYTTNTVNQSIEVINLNTKAMTAFYFKDEVPKYIALAPEESKMFVAFQKSMHSISGLTLYEMQMNGLGKRKLIREGLIGPQLPMYYDRDSKTLFVSDLLPGYIYSHSAQDTRILRSGLKSPHSLTVAGDNLFWIESQNKLYSTNFRTASVKQKTVEFDLSKLNDNMTSLPGHLTPYSRDAQYVVTLRKDDIPKHDCQKNNGNCSHVCLPSLITSFICACPPGMELSNDNRTCISHHECSKNEYKCSEHNICIQRNQLCDGIENCPNGEDETSECRIKGRCKENQFMCKNGDCIRLKDRCNSRYDCTDQSDEQNCEKPKCKSDEFQCKFTETCIPKTKMCDSNPDCDDLSDEEDCRKVECTSNEFKCNNGKCIPNTFVCDNDNDCEDGEDEAAEKCYSKIACKMPKMFKCPNGDCISDSLLCNGINDCNDGSDEVHCLSNVTTHLVNCSLNEYRCLGTDICLPKNVRCDGKNDCPQSDDEQNCTYCFENEFACDNKRCIPELWVCDKANDCGDNSDEKNCDGSKRNFIESNECDEFKCSVGTCLPYSKVCDGNRDCPDGSDETGKCQTACTVNNFCKGMCYKTPAGAVCGCQSGYRLAVDMISCEDINECELDICSQMCRNTIGSYECFCKDEFIIRNDKTSCKAVGPAMEFITVTDNDIRKMTHNLHSTTQLLFPLMGVRVSGLDVNAVSDSVYWSNDEFGTIKKLNIRTNEIVTVKIVEHPQALAVDWITGNVYVNDNSHLNTIKVCNLEKGKCATLVKIQDKMKVASVIVDSINRWLFWAEISLEADHPTSKICRTDMTGADMKIIASDLGFVRGMTIDHVKSKLYWSDDFYKTVESSNFDGSQRKVVLTLNMNHALSISIFEQSLYFLSSDNLLSSCKMYGKRSCEHVNIGANNVFRLFSILHISRQVPFANPCDAEYCDYMCVLKKENATCICSDGESIESNSTCNIKNDLKFVESINFSRNTRNISGIYSITIIVLLVSVLLLCVYYYYQKNKLKSKPASNLSCSSIHFQNPSYDRSDEIEVMLDSMASSELSPGQHEYINPINNKGMKAAENNAKKSNQCSEGKNIEEEKQDALIYFVHNSK.

A signal peptide spans 1–18 (MRFIVLLFICSFIYPCYV). At 19 to 1663 (SSIGFRRISK…SINFSRNTRN (1645 aa)) the chain is on the extracellular side. LDL-receptor class A domains lie at 35-72 (KCEDGYFQCNSGECIPVDKKCDYIDHCIDGSDEDFECD), 81-118 (TCAKDQFKCKNQECIPAAKYCDMVNDCLDESDEHDGCV), and 122-157 (NCTNKFLCTDGHCINKEWVCDGRNDCPDGNDEWNCK). 6 disulfides stabilise this stretch: cysteine 36–cysteine 48, cysteine 43–cysteine 61, cysteine 55–cysteine 71, cysteine 82–cysteine 94, cysteine 89–cysteine 107, and cysteine 101–cysteine 117. Asparagine 122 is a glycosylation site (N-linked (GlcNAc...) asparagine). 3 disulfide bridges follow: cysteine 123–cysteine 134, cysteine 129–cysteine 147, and cysteine 141–cysteine 156. A glycan (N-linked (GlcNAc...) asparagine) is linked at asparagine 159. Residues 166-205 (SCKTENYQYMCANHRCISLKVVCDKKDDCGDGSDEGPGCT) form the LDL-receptor class A 4 domain. 3 cysteine pairs are disulfide-bonded: cysteine 167-cysteine 181, cysteine 176-cysteine 194, and cysteine 188-cysteine 204. Asparagine 208 and asparagine 239 each carry an N-linked (GlcNAc...) asparagine glycan. Residues 208 to 243 (NCSSAGCQSNCHQTPKGSVCTCKPGYKLQKDNRTCN) form the EGF-like 1 domain. An EGF-like; calcium-binding domain is found at 244–283 (DIDECQAYGICDQDCMNVPGSYACTCQREYYLENDKRTCK). Cystine bridges form between cysteine 248-cysteine 258, cysteine 254-cysteine 267, and cysteine 269-cysteine 282. 5 LDL-receptor class B repeats span residues 327 to 374 (DYVY…DWIT), 375 to 416 (KNIY…LPTQ), 417 to 460 (GKMY…DYPN), 461 to 501 (ERLY…TVFQ), and 502 to 544 (NKLY…DHSA). The 37-residue stretch at 552–588 (PCYSNPCSQLCMLNQNKGYTCGCTLDKKLNADKHTCQ) folds into the EGF-like 2 domain. N-linked (GlcNAc...) asparagine glycans are attached at residues asparagine 702, asparagine 859, asparagine 896, and asparagine 923. The EGF-like 3 domain maps to 889 to 927 (DCQKNNGNCSHVCLPSLITSFICACPPGMELSNDNRTCI). LDL-receptor class A domains lie at 931–969 (ECSKNEYKCSEHNICIQRNQLCDGIENCPNGEDETSECR), 973–1009 (RCKENQFMCKNGDCIRLKDRCNSRYDCTDQSDEQNCE), 1012–1049 (KCKSDEFQCKFTETCIPKTKMCDSNPDCDDLSDEEDCR), 1052–1090 (ECTSNEFKCNNGKCIPNTFVCDNDNDCEDGEDEAAEKCY), and 1094–1131 (ACKMPKMFKCPNGDCISDSLLCNGINDCNDGSDEVHCL). 15 cysteine pairs are disulfide-bonded: cysteine 932/cysteine 945, cysteine 939/cysteine 958, cysteine 952/cysteine 968, cysteine 974/cysteine 986, cysteine 981/cysteine 999, cysteine 993/cysteine 1008, cysteine 1013/cysteine 1026, cysteine 1020/cysteine 1039, cysteine 1033/cysteine 1048, cysteine 1053/cysteine 1065, cysteine 1060/cysteine 1078, cysteine 1072/cysteine 1089, cysteine 1095/cysteine 1108, cysteine 1103/cysteine 1121, and cysteine 1115/cysteine 1130. Residues asparagine 1133 and asparagine 1140 are each glycosylated (N-linked (GlcNAc...) asparagine). LDL-receptor class A domains lie at 1140–1177 (NCSLNEYRCLGTDICLPKNVRCDGKNDCPQSDDEQNCT), 1178–1214 (YCFENEFACDNKRCIPELWVCDKANDCGDNSDEKNCD), and 1225–1260 (ECDEFKCSVGTCLPYSKVCDGNRDCPDGSDETGKCQ). Cystine bridges form between cysteine 1141–cysteine 1154, cysteine 1148–cysteine 1167, cysteine 1161–cysteine 1176, cysteine 1179–cysteine 1191, cysteine 1186–cysteine 1204, cysteine 1198–cysteine 1213, cysteine 1226–cysteine 1236, cysteine 1231–cysteine 1249, and cysteine 1243–cysteine 1259. Asparagine 1175 is a glycosylation site (N-linked (GlcNAc...) asparagine). Residues 1262–1298 (ACTVNNFCKGMCYKTPAGAVCGCQSGYRLAVDMISCE) enclose the EGF-like 4 domain. LDL-receptor class B repeat units lie at residues 1385-1425 (DSVY…DWIT), 1471-1518 (RWLF…DHVK), and 1519-1561 (SKLY…FEQS). N-linked (GlcNAc...) asparagine glycans are attached at residues asparagine 1626, asparagine 1640, and asparagine 1656. Residues 1664–1684 (ISGIYSITIIVLLVSVLLLCV) traverse the membrane as a helical segment. The Cytoplasmic segment spans residues 1685-1782 (YYYYQKNKLK…ALIYFVHNSK (98 aa)).

In terms of tissue distribution, expressed in ovaries of reproductive females.

The protein resides in the membrane. In terms of biological role, involved in uptake of vitellogenin by endocytosis. Expression is regulated by the juvenile hormone analog, methoprene (in vitro). This is Vitellogenin receptor from Solenopsis invicta (Red imported fire ant).